Reading from the N-terminus, the 129-residue chain is Small ribosomal subunit protein uS11c (129 aa).

It belongs to the universal ribosomal protein uS11 family. In terms of assembly, part of the 30S ribosomal subunit.

The protein localises to the plastid. It localises to the chloroplast. The chain is Small ribosomal subunit protein uS11c from Euglena gracilis.